Reading from the N-terminus, the 346-residue chain is NADH-ubiquinone oxidoreductase chain 2 (346 aa).

10 helical membrane passes run 25-45 (HWIL…PLIS), 52-72 (AIEA…LILF), 95-115 (CLIL…HFWF), 124-144 (LITA…LLLM), 149-169 (LNPA…GWMG), 178-196 (ILAF…IIIY), 200-219 (LTIL…FLSL), 247-267 (TLLS…WLII), 274-294 (EMTP…FFYL), and 326-346 (AILT…TTLV).

It belongs to the complex I subunit 2 family.

The protein resides in the mitochondrion inner membrane. The catalysed reaction is a ubiquinone + NADH + 5 H(+)(in) = a ubiquinol + NAD(+) + 4 H(+)(out). Its function is as follows. Core subunit of the mitochondrial membrane respiratory chain NADH dehydrogenase (Complex I) that is believed to belong to the minimal assembly required for catalysis. Complex I functions in the transfer of electrons from NADH to the respiratory chain. The immediate electron acceptor for the enzyme is believed to be ubiquinone. This is NADH-ubiquinone oxidoreductase chain 2 (MT-ND2) from Coturnix japonica (Japanese quail).